Consider the following 240-residue polypeptide: Enolase-phosphatase E1 (240 aa).

Belongs to the HAD-like hydrolase superfamily. MasA/MtnC family. As to quaternary structure, monomer. The cofactor is Mg(2+).

The enzyme catalyses 5-methylsulfanyl-2,3-dioxopentyl phosphate + H2O = 1,2-dihydroxy-5-(methylsulfanyl)pent-1-en-3-one + phosphate. It functions in the pathway amino-acid biosynthesis; L-methionine biosynthesis via salvage pathway; L-methionine from S-methyl-5-thio-alpha-D-ribose 1-phosphate: step 3/6. It participates in amino-acid biosynthesis; L-methionine biosynthesis via salvage pathway; L-methionine from S-methyl-5-thio-alpha-D-ribose 1-phosphate: step 4/6. Functionally, bifunctional enzyme that catalyzes the enolization of 2,3-diketo-5-methylthiopentyl-1-phosphate (DK-MTP-1-P) into the intermediate 2-hydroxy-3-keto-5-methylthiopentenyl-1-phosphate (HK-MTPenyl-1-P), which is then dephosphorylated to form the acireductone 1,2-dihydroxy-3-keto-5-methylthiopentene (DHK-MTPene). This chain is Enolase-phosphatase E1, found in Saccharopolyspora erythraea (strain ATCC 11635 / DSM 40517 / JCM 4748 / NBRC 13426 / NCIMB 8594 / NRRL 2338).